Here is a 279-residue protein sequence, read N- to C-terminus: Thymidylate synthase (279 aa).

133–134 (RR) is a binding site for dUMP. Cys-154 acts as the Nucleophile in catalysis. DUMP contacts are provided by residues 178–181 (RSND), Asn-189, and 219–221 (HIY). (6R)-5,10-methylene-5,6,7,8-tetrahydrofolate is bound at residue Asp-181. A (6R)-5,10-methylene-5,6,7,8-tetrahydrofolate-binding site is contributed by Ala-278.

The protein belongs to the thymidylate synthase family. Bacterial-type ThyA subfamily. As to quaternary structure, homodimer.

It localises to the cytoplasm. It catalyses the reaction dUMP + (6R)-5,10-methylene-5,6,7,8-tetrahydrofolate = 7,8-dihydrofolate + dTMP. It functions in the pathway pyrimidine metabolism; dTTP biosynthesis. Catalyzes the reductive methylation of 2'-deoxyuridine-5'-monophosphate (dUMP) to 2'-deoxythymidine-5'-monophosphate (dTMP) while utilizing 5,10-methylenetetrahydrofolate (mTHF) as the methyl donor and reductant in the reaction, yielding dihydrofolate (DHF) as a by-product. This enzymatic reaction provides an intracellular de novo source of dTMP, an essential precursor for DNA biosynthesis. This chain is Thymidylate synthase, found in Streptococcus sanguinis (strain SK36).